The chain runs to 1188 residues: DNA-directed RNA polymerase subunit beta (1188 aa).

Belongs to the RNA polymerase beta chain family. The RNAP catalytic core consists of 2 alpha, 1 beta, 1 beta' and 1 omega subunit. When a sigma factor is associated with the core the holoenzyme is formed, which can initiate transcription.

It catalyses the reaction RNA(n) + a ribonucleoside 5'-triphosphate = RNA(n+1) + diphosphate. DNA-dependent RNA polymerase catalyzes the transcription of DNA into RNA using the four ribonucleoside triphosphates as substrates. In Streptococcus pyogenes serotype M3 (strain ATCC BAA-595 / MGAS315), this protein is DNA-directed RNA polymerase subunit beta.